Here is an 826-residue protein sequence, read N- to C-terminus: Golgin subfamily A member 6-like protein 25 (826 aa).

6 disordered regions span residues 1-100 (MWPQ…HQEA), 297-327 (QEQE…MRRQ), 345-425 (MHEQ…EMWR), 502-534 (QEEM…MWRQ), 547-646 (RQEE…EQEE), and 658-826 (QEEM…MQEH). Positions 31–52 (MSKETRQSKLAEAKEQLTDHHP) are enriched in basic and acidic residues. 2 stretches are compositionally biased toward polar residues: residues 53–63 (QTNPSVGTAAS) and 71–83 (NNGT…TSGG). Basic and acidic residues predominate over residues 86–100 (SPEDEQKASHQHQEA). The stretch at 157 to 822 (LEQALSAVAT…EVRLRQQEEK (666 aa)) forms a coiled coil. Basic and acidic residues-rich tracts occupy residues 658–678 (QEEM…KMWE) and 686–826 (QEEK…MQEH).

It belongs to the GOLGA6 family.

The polypeptide is Golgin subfamily A member 6-like protein 25 (Homo sapiens (Human)).